A 644-amino-acid chain; its full sequence is Forkhead box protein O (644 aa).

The interval 39–75 is disordered; sequence FEPQTRARSNTWPCPRPENFVEPPDELDSTKASNQQL. Residue T49 is modified to Phosphothreonine; by PKB/AKT1. S80 is modified (phosphoserine). Positions 100 to 206 form a DNA-binding region, fork-head; it reads WGNLSYADLI…ETSRYEKRRG (107 aa). 5 disordered regions span residues 187 to 210, 222 to 276, 329 to 386, 412 to 435, and 578 to 612; these read KSVR…RAKK, GLND…SPIR, QQQQ…QTLQ, SPNS…DSLN, and QQHL…NSSL. S195 carries the phosphoserine; by PKB/AKT1 modification. Composition is skewed to polar residues over residues 226-235 and 261-270; these read ATPSPSSSVS and RASSNASSCG. S264 carries the post-translational modification Phosphoserine; by PKB/AKT1. Residues S267, S268, and S273 each carry the phosphoserine modification. Over residues 329 to 340 the composition is skewed to low complexity; the sequence is QQQQQQQQQQQQ. Positions 350 to 359 are enriched in pro residues; that stretch reads SQPPPPPYQP. Residues 360–374 show a composition bias toward low complexity; that stretch reads PQLQQQQQQQPSYSL. The span at 412–421 shows a compositional bias: polar residues; it reads SPNSVTTTMS.

Interacts with melt.

Its subcellular location is the cytoplasm. It localises to the nucleus. In terms of biological role, transcription factor involved in the regulation of the insulin signaling pathway. Consistently activates both the downstream target Thor\d4EBP and the feedback control target InR. Involved in negative regulation of the cell cycle, modulating cell growth and proliferation. In response to cellular stresses, such as nutrient deprivation or increased levels of reactive oxygen species, foxo is activated and inhibits growth through the action of target genes such as Thor. Foxo activated in the adult fat body can regulate lifespan in adults; an insulin peptide itself may function as one secondary messenger of insulin-regulated aging. Also regulates Lip4, homolog of human acid lipases, thereby acting as a key modulator of lipid metabolism by insulin signaling and integrates insulin responses to glucose and lipid homeostasis. The protein is Forkhead box protein O of Drosophila pseudoobscura pseudoobscura (Fruit fly).